The sequence spans 349 residues: Isopentenyl-diphosphate delta-isomerase (349 aa).

A substrate-binding site is contributed by 6–7; it reads RK. FMN-binding positions include 62–64, serine 93, and asparagine 122; that span reads AMT. Residue glutamine 152 participates in substrate binding. A Mg(2+)-binding site is contributed by glutamate 153. Residues lysine 184, threonine 214, 258-259, and 280-281 contribute to the FMN site; these read GG and AG.

It belongs to the IPP isomerase type 2 family. In terms of assembly, homooctamer. Dimer of tetramers. It depends on FMN as a cofactor. NADPH serves as cofactor. Mg(2+) is required as a cofactor.

It is found in the cytoplasm. The enzyme catalyses isopentenyl diphosphate = dimethylallyl diphosphate. Its function is as follows. Involved in the biosynthesis of isoprenoids. Catalyzes the 1,3-allylic rearrangement of the homoallylic substrate isopentenyl (IPP) to its allylic isomer, dimethylallyl diphosphate (DMAPP). The chain is Isopentenyl-diphosphate delta-isomerase from Bacillus mycoides (strain KBAB4) (Bacillus weihenstephanensis).